Here is a 44-residue protein sequence, read N- to C-terminus: MSYYSHLSGGLGCGLAVAVTMGRTVAVAEYGRCRHGCHSSYSAR.

Belongs to the KRTAP type 20 family. In terms of assembly, interacts with hair keratins.

Functionally, in the hair cortex, hair keratin intermediate filaments are embedded in an interfilamentous matrix, consisting of hair keratin-associated proteins (KRTAP), which are essential for the formation of a rigid and resistant hair shaft through their extensive disulfide bond cross-linking with abundant cysteine residues of hair keratins. The matrix proteins include the high-sulfur and high-glycine-tyrosine keratins. This Homo sapiens (Human) protein is Putative keratin-associated protein 20-4 (KRTAP20-4).